Reading from the N-terminus, the 478-residue chain is Cytochrome c-552 (478 aa).

Residues 1–26 (MARKTLRARRFFSLIFPFFFITSVYA) form the signal peptide. Position 94 (His-94) interacts with heme c. 3 residues coordinate heme: Cys-122, Cys-125, and Lys-126. The heme c site is built by Cys-160, Cys-163, His-164, Cys-209, Cys-212, and His-213. Ca(2+)-binding residues include Glu-215, Tyr-216, Lys-261, and Gln-263. Tyr-216 is a substrate binding site. Residue His-264 participates in substrate binding. Heme c-binding residues include His-275, Cys-282, Cys-285, His-286, His-301, Cys-314, Cys-317, His-318, and His-393.

This sequence belongs to the cytochrome c-552 family. The cofactor is Ca(2+). It depends on heme c as a cofactor.

It is found in the periplasm. It carries out the reaction 6 Fe(III)-[cytochrome c] + NH4(+) + 2 H2O = 6 Fe(II)-[cytochrome c] + nitrite + 8 H(+). It functions in the pathway nitrogen metabolism; nitrate reduction (assimilation). In terms of biological role, catalyzes the reduction of nitrite to ammonia, consuming six electrons in the process. This Salmonella gallinarum (strain 287/91 / NCTC 13346) protein is Cytochrome c-552.